Consider the following 442-residue polypeptide: Glutamyl-tRNA reductase (442 aa).

Residues T49–R52, S109, E114–Q116, and Q120 each bind substrate. Residue C50 is the Nucleophile of the active site. G189–S194 lines the NADP(+) pocket.

This sequence belongs to the glutamyl-tRNA reductase family. As to quaternary structure, homodimer.

The catalysed reaction is (S)-4-amino-5-oxopentanoate + tRNA(Glu) + NADP(+) = L-glutamyl-tRNA(Glu) + NADPH + H(+). Its pathway is porphyrin-containing compound metabolism; protoporphyrin-IX biosynthesis; 5-aminolevulinate from L-glutamyl-tRNA(Glu): step 1/2. Its function is as follows. Catalyzes the NADPH-dependent reduction of glutamyl-tRNA(Glu) to glutamate 1-semialdehyde (GSA). This chain is Glutamyl-tRNA reductase, found in Kineococcus radiotolerans (strain ATCC BAA-149 / DSM 14245 / SRS30216).